The sequence spans 389 residues: Type II methyltransferase M1.ScrFI (389 aa).

The HTH cro/C1-type domain maps to I16 to F71. In terms of domain architecture, SAM-dependent MTase C5-type spans Y79–S387. C149 is a catalytic residue.

This sequence belongs to the class I-like SAM-binding methyltransferase superfamily. C5-methyltransferase family.

The catalysed reaction is a 2'-deoxycytidine in DNA + S-adenosyl-L-methionine = a 5-methyl-2'-deoxycytidine in DNA + S-adenosyl-L-homocysteine + H(+). A methylase, recognizes the double-stranded sequence 5'-CCNGG-3', methylates C-2 on both strands, and protects the DNA from cleavage by the ScrFI endonuclease. The chain is Type II methyltransferase M1.ScrFI (scrFIAM) from Lactococcus lactis subsp. cremoris (Streptococcus cremoris).